Reading from the N-terminus, the 507-residue chain is ATP synthase subunit alpha, chloroplastic (507 aa).

An ATP-binding site is contributed by 170-177; the sequence is GDRQTGKT. Thr257 is subject to Phosphothreonine.

Belongs to the ATPase alpha/beta chains family. As to quaternary structure, F-type ATPases have 2 components, CF(1) - the catalytic core - and CF(0) - the membrane proton channel. CF(1) has five subunits: alpha(3), beta(3), gamma(1), delta(1), epsilon(1). CF(0) has four main subunits: a, b, b' and c.

It is found in the plastid. The protein resides in the chloroplast thylakoid membrane. The catalysed reaction is ATP + H2O + 4 H(+)(in) = ADP + phosphate + 5 H(+)(out). In terms of biological role, produces ATP from ADP in the presence of a proton gradient across the membrane. The alpha chain is a regulatory subunit. The protein is ATP synthase subunit alpha, chloroplastic of Arabis hirsuta (Hairy rock-cress).